A 150-amino-acid chain; its full sequence is Ribonuclease K6 (150 aa).

An N-terminal signal peptide occupies residues 1 to 23 (MVLCFPLLLLLLVLWGPVCPLHA). His-38 acts as the Proton acceptor in catalysis. 4 cysteine pairs are disulfide-bonded: Cys-46-Cys-104, Cys-60-Cys-114, Cys-78-Cys-129, and Cys-85-Cys-92. Residue Asn-55 is glycosylated (N-linked (GlcNAc...) asparagine). Substrate-binding positions include 61-65 (KHQNT) and Lys-86. Residue Asn-100 is glycosylated (N-linked (GlcNAc...) asparagine). Arg-105 contacts substrate. Catalysis depends on His-145, which acts as the Proton donor.

Belongs to the pancreatic ribonuclease family. As to quaternary structure, interacts (via N-terminus) with bacterial lipopolysaccharide (LPS).

The protein resides in the secreted. It localises to the lysosome. Its subcellular location is the cytoplasmic granule. Ribonuclease which shows a preference for the pyrimidines uridine and cytosine. Has potent antibacterial activity against a range of Gram-positive and Gram-negative bacteria, including P.aeruginosa, A.baumanii, M.luteus, S.aureus, E.faecalis, E.faecium, S.saprophyticus and E.coli. Causes loss of bacterial membrane integrity, and also promotes agglutination of Gram-negative bacteria. Probably contributes to urinary tract sterility. Bactericidal activity is independent of RNase activity. The chain is Ribonuclease K6 (RNASE6) from Gorilla gorilla gorilla (Western lowland gorilla).